The primary structure comprises 310 residues: GPN-loop GTPase 2 (310 aa).

A2 bears the N-acetylalanine mark. 19-24 contributes to the GTP binding site; the sequence is GSGKTT. Residues 76 to 78 carry the Gly-Pro-Asn (GPN)-loop; involved in dimer interface motif; it reads GPN. A GTP-binding site is contributed by 178–181; it reads SKMD.

The protein belongs to the GPN-loop GTPase family. Heterodimers with GPN1 or GPN3. Binds to RNA polymerase II (RNAPII).

In terms of biological role, small GTPase required for proper localization of RNA polymerase II and III (RNAPII and RNAPIII). May act at an RNAP assembly step prior to nuclear import. The sequence is that of GPN-loop GTPase 2 (GPN2) from Bos taurus (Bovine).